Here is a 605-residue protein sequence, read N- to C-terminus: Podocalyxin-like protein 2 (605 aa).

Residues 1–32 (MGRLLRAARLPPLLSPLLLLLVGGAFLGACVA) form the signal peptide. The Extracellular segment spans residues 33–500 (GSDEPGPEGL…ASQVRSDYGT (468 aa)). O-linked (Xyl...) (chondroitin sulfate) serine glycosylation is present at S79. Residues Y97 and Y118 each carry the sulfotyrosine modification. The segment at 129 to 134 (SIEDTS) is O-glycosylated at one site. The interval 129–347 (SIEDTSQAQE…PGDMELTPSS (219 aa)) is disordered. S144 is a glycosylation site (O-linked (GalNAc...) serine). Positions 162–189 (EEEEEEEEEEEREKEEVEKQEEEEEEEL) are enriched in acidic residues. N-linked (GlcNAc...) asparagine glycosylation occurs at N193. Residues 207 to 217 (SLTSSSQTPGA) are compositionally biased toward polar residues. Composition is skewed to low complexity over residues 241–255 (PSLLLPSVTPTTVTP) and 288–298 (EATAGAAGLSG). N395 carries an N-linked (GlcNAc...) asparagine glycan. The helical transmembrane segment at 501 to 521 (LFVVLVVIGAICIIIIALGLL) threads the bilayer. Residues 522–605 (YNCWQRRLPK…SDVFEEDTHL (84 aa)) lie on the Cytoplasmic side of the membrane. The disordered stretch occupies residues 554–605 (LDVASDSQSEMQEKHPSLNGGGALNGPGSWGALMGGKRDPEDSDVFEEDTHL). S570 is modified (phosphoserine). A compositionally biased stretch (gly residues) spans 572–582 (NGGGALNGPGS). A compositionally biased stretch (acidic residues) spans 594-605 (EDSDVFEEDTHL). Position 596 is a phosphoserine (S596).

This sequence belongs to the podocalyxin family. As to quaternary structure, homodimer; disulfide-linked. Interacts with SELL, SELE and SELP. In terms of processing, O-glycosylated; contains chondroitin sulfate. Displays sialylated O-linked oligosaccharides. Sulfation is necessary for interaction with SELL. Sialylated O-linked oligosaccharides are necessary for interaction with SELL, SELE and SELP. Expressed in T-cells, B-cells and monocytes. Expression is higher on memory and germinal center cells than on naive B-cells (at protein level). Highly expressed in brain. Moderately expressed in pancreas, kidney and lymphoid node. Weakly expressed in liver. Detected in both endothelial cells and CD34+ bone marrow cells.

It is found in the membrane. Functionally, acts as a ligand for vascular selectins. Mediates rapid rolling of leukocytes over vascular surfaces through high affinity divalent cation-dependent interactions with E-, P- and L-selectins. The chain is Podocalyxin-like protein 2 (PODXL2) from Homo sapiens (Human).